A 211-amino-acid polypeptide reads, in one-letter code: Beta-crystallin B3 (211 aa).

Met-1 bears the N-acetylmethionine mark. An N-acetylalanine; in Beta-crystallin B3, N-terminally processed modification is found at Ala-2. An N-terminal arm region spans residues 2-23 (AEQHGAPEQAAAGKSHGDLGGS). Beta/gamma crystallin 'Greek key' domains follow at residues 24–63 (YKVI…QVES) and 64–108 (GPWL…RPLN). The segment at 109-113 (IDSPH) is connecting peptide. Beta/gamma crystallin 'Greek key' domains lie at 114-155 (HKLH…RAIN) and 156-198 (GTWV…RRIR). The C-terminal arm stretch occupies residues 200-211 (QKWHKRGRFPSS).

This sequence belongs to the beta/gamma-crystallin family. In terms of assembly, homo/heterodimer, or complexes of higher-order. The structure of beta-crystallin oligomers seems to be stabilized through interactions between the N-terminal arms.

In terms of biological role, crystallins are the dominant structural components of the vertebrate eye lens. In Homo sapiens (Human), this protein is Beta-crystallin B3 (CRYBB3).